The sequence spans 60 residues: U1-theraphotoxin-Agm3a (60 aa).

Positions 1–21 are cleaved as a signal peptide; it reads MKFSVLVFILGLVLLLALSSA. A propeptide spanning residues 22 to 29 is cleaved from the precursor; it reads TEMEENAR. Disulfide bonds link C31–C45, C38–C50, and C44–C57.

It belongs to the neurotoxin 10 (Hwtx-1) family. 63 (VsTx1) subfamily. As to expression, expressed by the venom gland.

The protein resides in the secreted. Its function is as follows. Inhibits sodium channels Nav1.7/SCN9A and potassium channels Kv11.1/KCNH2. Also binds the voltage-sensor domain of the potassium channel KvAP (from the archaeon Aeropyrum pernix) with very slow apparent binding kinetics and affects channel gating. Reaches its target by dynamically partitioning into anionic or zwitterionic headgroup lipid membranes. May bind to the open state of KvAP. This is U1-theraphotoxin-Agm3a from Acanthoscurria gomesiana (Tarantula spider).